The primary structure comprises 244 residues: Cell division protein ZapD (244 aa).

Belongs to the ZapD family. In terms of assembly, interacts with FtsZ.

It is found in the cytoplasm. In terms of biological role, cell division factor that enhances FtsZ-ring assembly. Directly interacts with FtsZ and promotes bundling of FtsZ protofilaments, with a reduction in FtsZ GTPase activity. The polypeptide is Cell division protein ZapD (Shewanella sp. (strain MR-7)).